The following is a 602-amino-acid chain: Multidrug and toxin extrusion protein 2 (602 aa).

Residues 1 to 33 lie on the Cytoplasmic side of the membrane; that stretch reads MDSLQDTVALDHGGCCPALSRLVPRGFGTEMWT. Residues 34–54 form a helical membrane-spanning segment; the sequence is LFALSGPLFLFQVLTFMIYIV. The Extracellular portion of the chain corresponds to 55–66; sequence STVFCGHLGKVE. Residues 67–87 traverse the membrane as a helical segment; sequence LASVTLAVAFVNVCGVSVGVG. Residues 88-119 lie on the Cytoplasmic side of the membrane; that stretch reads LSSACDTLMSQSFGSPNKKHVGVILQRGALVL. Residues 120–140 form a helical membrane-spanning segment; the sequence is LLCCLPCWALFLNTQHILLLF. At 141-153 the chain is on the extracellular side; that stretch reads RQDPDVSRLTQDY. Residues 154–174 form a helical membrane-spanning segment; it reads VMIFIPGLPVIFLYNLLAKYL. Topologically, residues 175-219 are cytoplasmic; that stretch reads QNQGWLKGQEEESPFQTPGLSILHPSHSHLSRASFHLFQKITWPQ. Residues 220-240 traverse the membrane as a helical segment; it reads VLSGVVGNCVNGVANYALVSV. Over 241–248 the chain is Extracellular; that stretch reads LNLGVRGS. Residues 249-269 form a helical membrane-spanning segment; it reads AYANIISQFAQTVFLLLYIVL. Topologically, residues 270-289 are cytoplasmic; the sequence is KKLHLETWAGWSSQCLQDWG. Residues 290–309 form a helical membrane-spanning segment; sequence PFFSLAVPSMLMICVEWWAY. Topologically, residues 310–327 are extracellular; that stretch reads EIGSFLMGLLSVVDLSAQ. The chain crosses the membrane as a helical span at residues 328 to 348; that stretch reads AVIYEVATVTYMIPLGLSIGV. Topologically, residues 349–368 are cytoplasmic; sequence CVRVGMALGAADTVQAKRSA. A helical transmembrane segment spans residues 369–389; it reads VSGVLSIVGISLVLGTLISIL. The Extracellular segment spans residues 390 to 402; the sequence is KNQLGHIFTNDED. Residues 403–423 traverse the membrane as a helical segment; it reads VIALVSQVLPVYSVFHVFEAI. Residues 424-442 are Cytoplasmic-facing; it reads CCVYGGVLRGTGKQAFGAA. The helical transmembrane segment at 443-463 threads the bilayer; that stretch reads VNAITYYIIGLPLGILLTFVV. At 464-466 the chain is on the extracellular side; the sequence is RMR. A helical membrane pass occupies residues 467 to 487; sequence IMGLWLGMLACVFLATAAFVA. Topologically, residues 488–578 are cytoplasmic; it reads YTARLDWKLA…LSVKQLVIRR (91 aa). The interval 503-529 is disordered; that stretch reads KHSGRQQQQRAESTATRPGPEKAVLSS. Positions 507 to 518 are enriched in polar residues; sequence RQQQQRAESTAT. The chain crosses the membrane as a helical span at residues 579–599; sequence GAALGAASATLMVGLTVRILA. Residues 600 to 602 lie on the Extracellular side of the membrane; it reads TRH.

Belongs to the multi antimicrobial extrusion (MATE) (TC 2.A.66.1) family. In terms of tissue distribution, high expression in kidney. Very small expression in adrenal gland and lung. As to expression, high expression in kidney. Very small expression in brain and testis. Ubiquitously expressed in all tissues examined except the kidney.

It localises to the cell membrane. It is found in the apical cell membrane. The enzyme catalyses thiamine(out) + H(+)(in) = thiamine(in) + H(+)(out). The catalysed reaction is estrone 3-sulfate(in) + H(+)(out) = estrone 3-sulfate(out) + H(+)(in). It catalyses the reaction creatinine(in) + H(+)(out) = creatinine(out) + H(+)(in). Its function is as follows. Multidrug efflux pump that functions as a H(+)/organic cation antiporter. Mediates the efflux of cationic compounds, such as the model cations, tetraethylammonium (TEA) and 1-methyl-4-phenylpyridinium (MPP+), the platinum-based drug oxaliplatin or weak bases that are positively charged at physiological pH, cimetidine, the platinum-based drugs cisplatin and oxaliplatin or the antidiabetic drug metformin. Mediates the efflux of endogenous compounds such as, creatinine, thiamine and estrone-3-sulfate. Plays a physiological role in the excretion of drugs, toxins and endogenous metabolites through the kidney. Non-functional protein. The polypeptide is Multidrug and toxin extrusion protein 2 (Homo sapiens (Human)).